Here is a 676-residue protein sequence, read N- to C-terminus: Envelope glycoprotein (676 aa).

The signal sequence occupies residues M1–S32. Over I33 to Q650 the chain is Extracellular. N-linked (GlcNAc...) asparagine; by host glycosylation is present at N40. 5 cysteine pairs are disulfide-bonded: C53-C609, C108-C135, C121-C147, C511-C556, and C601-C608. Residues R54–E201 are receptor-binding. N-linked (GlcNAc...) asparagine; by host glycans are attached at residues N204, N228, N257, N268, and N296. The segment at E305–T485 is mucin-like region. Residues I356 to A463 form a disordered region. Low complexity predominate over residues T361–P374. Residues T402–N422 are compositionally biased toward polar residues. Residue N414 is glycosylated (N-linked (GlcNAc...) asparagine; by host). Positions P423–P440 are enriched in low complexity. N-linked (GlcNAc...) asparagine; by host glycosylation is present at N441. Residues T452–A463 are compositionally biased toward polar residues. A fusion peptide region spans residues G524–A539. Residues L554 to Q595 are a coiled coil. An N-linked (GlcNAc...) asparagine; by host glycan is attached at N563. A coiled-coil region spans residues W615–N634. The N-linked (GlcNAc...) asparagine; by host glycan is linked to N618. Residues W651 to I671 form a helical membrane-spanning segment. S-palmitoyl cysteine; by host attachment occurs at residues C670 and C672. Over C672–L676 the chain is Cytoplasmic.

Belongs to the filoviruses glycoprotein family. Homotrimer; each monomer consists of a GP1 and a GP2 subunit linked by disulfide bonds. The resulting peplomers (GP1,2) protrude from the virus surface as spikes. GP1 and GP2delta are part of GP1,2delta soluble complexes released by ectodomain shedding. GP1,2 interacts with host integrin ITGAV/alpha-V and CLEC10A. Also binds human CD209 and CLEC4M (collectively referred to as DC-SIGN(R)), as well as human FOLR1. Interacts with host entry receptor NPC1. Post-translationally, the signal peptide region modulates GP's high mannose glycosylation, thereby determining the efficiency of the interactions with DC-SIGN(R). In terms of processing, N-glycosylated. O-glycosylated in the mucin-like region. Post-translationally, palmitoylation of GP2 is not required for its function. In terms of processing, specific enzymatic cleavages in vivo yield mature proteins. The precursor is processed into GP1 and GP2 by host cell furin in the trans Golgi, and maybe by other host proteases, to yield the mature GP1 and GP2 proteins. The cleavage site corresponds to the furin optimal cleavage sequence [KR]-X-[KR]-R. This cleavage does not seem to be required for function. After the internalization of the virus into cell endosomes, GP1 C-terminus is removed by the endosomal proteases cathepsin B, cathepsin L, or both, leaving a 19-kDa N-terminal fragment which is further digested by cathepsin B. Proteolytic processing of GP1,2 by host ADAM17 can remove the transmembrane anchor of GP2 and leads to shedding of complexes consisting in GP1 and truncated GP2 (GP1,2delta).

It localises to the virion membrane. Its subcellular location is the host cell membrane. It is found in the secreted. Its function is as follows. GP1 is responsible for binding to the receptor(s) on target cells. Interacts with CD209/DC-SIGN and CLEC4M/DC-SIGNR which act as cofactors for virus entry into the host cell. Binding to CD209 and CLEC4M, which are respectively found on dendritic cells (DCs), and on endothelial cells of liver sinusoids and lymph node sinuses, facilitate infection of macrophages and endothelial cells. These interactions not only facilitate virus cell entry, but also allow capture of viral particles by DCs and subsequent transmission to susceptible cells without DCs infection (trans infection). Binding to the macrophage specific lectin CLEC10A also seems to enhance virus infectivity. Interaction with FOLR1/folate receptor alpha may be a cofactor for virus entry in some cell types, although results are contradictory. Members of the Tyro3 receptor tyrosine kinase family also seem to be cell entry factors in filovirus infection. Once attached, the virions are internalized through clathrin-dependent endocytosis and/or macropinocytosis. After internalization of the virus into the endosomes of the host cell, proteolysis of GP1 by two cysteine proteases, CTSB/cathepsin B and CTSL/cathepsin L presumably induces a conformational change of GP2, unmasking its fusion peptide and initiating membranes fusion. Functionally, GP2 acts as a class I viral fusion protein. Under the current model, the protein has at least 3 conformational states: pre-fusion native state, pre-hairpin intermediate state, and post-fusion hairpin state. During viral and target cell membrane fusion, the coiled coil regions (heptad repeats) assume a trimer-of-hairpins structure, positioning the fusion peptide in close proximity to the C-terminal region of the ectodomain. The formation of this structure appears to drive apposition and subsequent fusion of viral and target cell membranes. Responsible for penetration of the virus into the cell cytoplasm by mediating the fusion of the membrane of the endocytosed virus particle with the endosomal membrane. Low pH in endosomes induces an irreversible conformational change in GP2, releasing the fusion hydrophobic peptide. GP1,2 which is the disulfid-linked complex of GP1 and GP2, mediates endothelial cell activation and decreases endothelial barrier function. Mediates activation of primary macrophages. At terminal stages of the viral infection, when its expression is high, GP1,2 down-modulates the expression of various host cell surface molecules that are essential for immune surveillance and cell adhesion. Down-modulates integrins ITGA1, ITGA2, ITGA3, ITGA4, ITGA5, ITGA6, ITGAV and ITGB1. GP1,2 alters the cellular recycling of the dimer alpha-V/beta-3 via a dynamin-dependent pathway. Decrease in the host cell surface expression of various adhesion molecules may lead to cell detachment, contributing to the disruption of blood vessel integrity and hemorrhages developed during Ebola virus infection (cytotoxicity). This cytotoxicity appears late in the infection, only after the massive release of viral particles by infected cells. Down-modulation of host MHC-I, leading to altered recognition by immune cells, may explain the immune suppression and inflammatory dysfunction linked to Ebola infection. Also down-modulates EGFR surface expression. Counteracts the antiviral effect of host tetherin. In terms of biological role, GP2delta is part of the complex GP1,2delta released by host ADAM17 metalloprotease. This secreted complex may play a role in the pathogenesis of the virus by efficiently blocking the neutralizing antibodies that would otherwise neutralize the virus surface glycoproteins GP1,2. Might therefore contribute to the lack of inflammatory reaction seen during infection in spite the of extensive necrosis and massive virus production. GP1,2delta does not seem to be involved in activation of primary macrophages. This Tai Forest ebolavirus (strain Cote d'Ivoire-94) (TAFV) protein is Envelope glycoprotein (GP).